The chain runs to 148 residues: Lysozyme C (148 aa).

The first 18 residues, 1 to 18 (MKALIVLGLVLLSVMVQG), serve as a signal peptide directing secretion. Residues 19 to 148 (KVFERCELAR…VRQYVQGCGV (130 aa)) enclose the C-type lysozyme domain. 4 disulfide bridges follow: cysteine 24–cysteine 146, cysteine 48–cysteine 134, cysteine 83–cysteine 99, and cysteine 95–cysteine 113. Residues glutamate 53 and aspartate 71 contribute to the active site.

Belongs to the glycosyl hydrolase 22 family. Monomer.

It carries out the reaction Hydrolysis of (1-&gt;4)-beta-linkages between N-acetylmuramic acid and N-acetyl-D-glucosamine residues in a peptidoglycan and between N-acetyl-D-glucosamine residues in chitodextrins.. In terms of biological role, lysozymes have primarily a bacteriolytic function; those in tissues and body fluids are associated with the monocyte-macrophage system and enhance the activity of immunoagents. The chain is Lysozyme C (LYZ) from Gorilla gorilla gorilla (Western lowland gorilla).